A 104-amino-acid chain; its full sequence is Gallinacin-11 (104 aa).

Positions 1 to 22 (MKLFSCLMALLLFLLQAVPGLG) are cleaved as a signal peptide. 3 disulfide bridges follow: C30-C60, C37-C53, and C43-C61.

Belongs to the beta-defensin family. Detected in outer membrane of the vitelline layer of the egg (at protein level). Expressed in the liver, gall bladder, kidney, testis, ovary and male and female reproductive tracts. Expressed in the ovarian stroma, but not in the ovarian follicles. No expression is detected in bone marrow.

Its subcellular location is the secreted. It localises to the cytoplasmic granule. In terms of biological role, has bactericidal activity. This Gallus gallus (Chicken) protein is Gallinacin-11 (GAL11).